Reading from the N-terminus, the 455-residue chain is MSLEIVILAAGQGTRMRSALPKVLHPIAGDSMLGHVIHSARQLDPQRIHVVIGHGADVVRERLAADDLNFVLQDKQLGTGHATAQAVPFITADTVLILYGDVPLIEVETLQRLLKHVVPGQMGLLTVELDDPTGYGRIVRDADGKVAAIVEHKDASEAQRAITEGNTGILAVPANRLADWMSRLSNNNAQGEYYLTDVIEMAVSDGLTVATEQPHDPMEVQGANDRKQLSELERHYQLRAGRRLMAQGVTLRDPARFDVRGEVTVGRDVLIDINVILEGKVVIEDDVVIGPNCVIKDSTLRKGVVIKANSHIEGAVLGEGSDAGPFARLRPGTVLEARAHVGNFVELKNARMGEGAKAGHLTYLGDAEIGARTNIGAGTITCNYDGANKWKTVLGEDVFIGSNNSLVAPVDISAGATTAAGSTITQNVENSQLAVGRARQKNIDGWKRPEKIKKN.

The tract at residues 1–226 is pyrophosphorylase; it reads MSLEIVILAA…PMEVQGANDR (226 aa). UDP-N-acetyl-alpha-D-glucosamine-binding positions include 8–11, lysine 22, glutamine 73, 78–79, 99–101, glycine 136, glutamate 151, asparagine 166, and asparagine 224; these read LAAG, GT, and YGD. Aspartate 101 contributes to the Mg(2+) binding site. Asparagine 224 lines the Mg(2+) pocket. The segment at 227-247 is linker; the sequence is KQLSELERHYQLRAGRRLMAQ. The segment at 248–455 is N-acetyltransferase; the sequence is GVTLRDPARF…WKRPEKIKKN (208 aa). Residues arginine 330 and lysine 348 each contribute to the UDP-N-acetyl-alpha-D-glucosamine site. Histidine 360 functions as the Proton acceptor in the catalytic mechanism. 2 residues coordinate UDP-N-acetyl-alpha-D-glucosamine: tyrosine 363 and asparagine 374. Acetyl-CoA contacts are provided by residues alanine 377, 383–384, serine 402, alanine 420, and arginine 437; that span reads NY.

This sequence in the N-terminal section; belongs to the N-acetylglucosamine-1-phosphate uridyltransferase family. The protein in the C-terminal section; belongs to the transferase hexapeptide repeat family. In terms of assembly, homotrimer. The cofactor is Mg(2+).

The protein localises to the cytoplasm. The catalysed reaction is alpha-D-glucosamine 1-phosphate + acetyl-CoA = N-acetyl-alpha-D-glucosamine 1-phosphate + CoA + H(+). The enzyme catalyses N-acetyl-alpha-D-glucosamine 1-phosphate + UTP + H(+) = UDP-N-acetyl-alpha-D-glucosamine + diphosphate. It participates in nucleotide-sugar biosynthesis; UDP-N-acetyl-alpha-D-glucosamine biosynthesis; N-acetyl-alpha-D-glucosamine 1-phosphate from alpha-D-glucosamine 6-phosphate (route II): step 2/2. Its pathway is nucleotide-sugar biosynthesis; UDP-N-acetyl-alpha-D-glucosamine biosynthesis; UDP-N-acetyl-alpha-D-glucosamine from N-acetyl-alpha-D-glucosamine 1-phosphate: step 1/1. It functions in the pathway bacterial outer membrane biogenesis; LPS lipid A biosynthesis. In terms of biological role, catalyzes the last two sequential reactions in the de novo biosynthetic pathway for UDP-N-acetylglucosamine (UDP-GlcNAc). The C-terminal domain catalyzes the transfer of acetyl group from acetyl coenzyme A to glucosamine-1-phosphate (GlcN-1-P) to produce N-acetylglucosamine-1-phosphate (GlcNAc-1-P), which is converted into UDP-GlcNAc by the transfer of uridine 5-monophosphate (from uridine 5-triphosphate), a reaction catalyzed by the N-terminal domain. In Pseudomonas fluorescens (strain Pf0-1), this protein is Bifunctional protein GlmU.